A 216-amino-acid chain; its full sequence is Uracil phosphoribosyltransferase (216 aa).

Residues arginine 85, arginine 110, and 135 to 143 (DPMVATGYS) each bind 5-phospho-alpha-D-ribose 1-diphosphate. Uracil-binding positions include isoleucine 200 and 205–207 (GDA). Residue aspartate 206 participates in 5-phospho-alpha-D-ribose 1-diphosphate binding.

It belongs to the UPRTase family. Requires Mg(2+) as cofactor.

The enzyme catalyses UMP + diphosphate = 5-phospho-alpha-D-ribose 1-diphosphate + uracil. Its pathway is pyrimidine metabolism; UMP biosynthesis via salvage pathway; UMP from uracil: step 1/1. With respect to regulation, allosterically activated by GTP. Its function is as follows. Catalyzes the conversion of uracil and 5-phospho-alpha-D-ribose 1-diphosphate (PRPP) to UMP and diphosphate. The sequence is that of Uracil phosphoribosyltransferase from Paraburkholderia xenovorans (strain LB400).